A 143-amino-acid chain; its full sequence is Peptide methionine sulfoxide reductase MsrB (143 aa).

The 124-residue stretch at aspartate 16–arginine 139 folds into the MsrB domain. Zn(2+) is bound by residues cysteine 55, cysteine 58, cysteine 104, and cysteine 107. The Nucleophile role is filled by cysteine 128.

The protein belongs to the MsrB Met sulfoxide reductase family. It depends on Zn(2+) as a cofactor.

It catalyses the reaction L-methionyl-[protein] + [thioredoxin]-disulfide + H2O = L-methionyl-(R)-S-oxide-[protein] + [thioredoxin]-dithiol. The sequence is that of Peptide methionine sulfoxide reductase MsrB from Burkholderia ambifaria (strain ATCC BAA-244 / DSM 16087 / CCUG 44356 / LMG 19182 / AMMD) (Burkholderia cepacia (strain AMMD)).